A 916-amino-acid chain; its full sequence is Protein translocase subunit SecA (916 aa).

Residues Gln-86, 104–108 (GEGKT), and Asp-494 contribute to the ATP site. Residues 859–916 (LEAPEKPAQLQYTAPSEGGGTQTRVETRSTGRSGNPAKAAEQDAAKDAAKRPAKKKRR) form a disordered region. Over residues 880–891 (QTRVETRSTGRS) the composition is skewed to polar residues. Positions 898–908 (AEQDAAKDAAK) are enriched in basic and acidic residues.

Belongs to the SecA family. Monomer and homodimer. Part of the essential Sec protein translocation apparatus which comprises SecA, SecYEG and auxiliary proteins SecDF. Other proteins may also be involved.

It localises to the cell membrane. It is found in the cytoplasm. It carries out the reaction ATP + H2O + cellular proteinSide 1 = ADP + phosphate + cellular proteinSide 2.. Functionally, part of the Sec protein translocase complex. Interacts with the SecYEG preprotein conducting channel. Has a central role in coupling the hydrolysis of ATP to the transfer of proteins into and across the cell membrane, serving as an ATP-driven molecular motor driving the stepwise translocation of polypeptide chains across the membrane. This Pseudarthrobacter chlorophenolicus (strain ATCC 700700 / DSM 12829 / CIP 107037 / JCM 12360 / KCTC 9906 / NCIMB 13794 / A6) (Arthrobacter chlorophenolicus) protein is Protein translocase subunit SecA.